The following is a 448-amino-acid chain: MATVFLGTVVHTKSFSEFESFEGGFLAVDDAGKIIGVGQDYHAWASSNPAHAKGLTEVHLSDYQFLMPGFVDCHIHAPQFAQLGLGLDMPLLDWLNTYTFPLEAKFSNHQYAQQVYQGVVEATLRCGTTLASYFATNHLESTLTLAREAVRQGQRALIGKVCSNCNSPEFYVETAEESVSATLAFVEGVRKLGSPMVMPTITPRFALSCSKELLKSLGDIAKRFDLHIQSHISENLEEIEMVKGIFKTSYAGAYDEAGLLTNKTVLAHGVHLEDDEVALLKVRGCSVAHCPTSNTMLSSGLCDVQRLVSGGVSVGLGTDVSGGNSVSIQDVLLRALDVSKHLDFFKKQNIRGTGVSKTQDFNYHQLKYKQALYLATLGGAKALSLDHLTGNFALGKDFDALLVDVSVVDKPLRRLSVDELVEKFIYTGSDRNIVEVFVAGKRIKQGYQ.

2 residues coordinate Zn(2+): histidine 74 and histidine 76. Substrate contacts are provided by residues 76 to 79 (HAPQ), 204 to 205 (RF), 231 to 234 (HISE), and aspartate 319. Zn(2+) contacts are provided by histidine 231 and aspartate 319.

This sequence belongs to the metallo-dependent hydrolases superfamily. ATZ/TRZ family. Requires Zn(2+) as cofactor.

It catalyses the reaction guanine + H2O + H(+) = xanthine + NH4(+). It functions in the pathway purine metabolism; guanine degradation; xanthine from guanine: step 1/1. With respect to regulation, strongly inhibited by p-chloromercuribenzoate (PCMB). Potassium cyanide (KCN) strongly inhibits activity towards 7,8-dihydropterin but has almost no effect on activity towards guanine. Pterin inhibits activity towards guanine but has little effect on activity towards 7,8-dihydropterin. Functionally, catalyzes the hydrolytic deamination of guanine, producing xanthine and ammonia. Also has 7,8-dihydropterin deaminase activity, which plays a role in synthesis of the red eye pigment aurodrosopterin. This Drosophila melanogaster (Fruit fly) protein is Guanine deaminase.